A 451-amino-acid chain; its full sequence is CCAAT/enhancer-binding protein (451 aa).

3 disordered regions span residues 210 to 236, 267 to 298, and 328 to 389; these read TYNN…EPID, QSNN…NSTN, and LKHH…AKVR. Composition is skewed to low complexity over residues 218–228, 268–298, and 334–350; these read ENSSVGSDSSS, SNNL…NSTN, and LQQT…QHAQ. Residues 359–370 are compositionally biased toward basic and acidic residues; it reads KHVDKGTEEYRR. The 64-residue stretch at 365–428 folds into the bZIP domain; it reads TEEYRRRRER…SLHKQIYMQL (64 aa). The tract at residues 369 to 398 is basic motif; sequence RRRRERNNIAVRKSREKAKVRSKEVEERVK. The leucine-zipper stretch occupies residues 400–407; the sequence is LLKEKDAL.

Belongs to the bZIP family. C/EBP subfamily. As to quaternary structure, binds DNA as a dimer and can form stable heterodimers.

The protein localises to the nucleus. Functionally, may be required for the expression of gene products mediating border cell migration. Among the DNA sequences that this protein binds with high affinity is a conserved site within the promoter of its gene. The sequence is that of CCAAT/enhancer-binding protein (slbo) from Drosophila virilis (Fruit fly).